A 707-amino-acid chain; its full sequence is Elongation factor G (707 aa).

The 281-residue stretch at 8 to 288 (QFTRNIGIMA…AVCKFLPSPA (281 aa)) folds into the tr-type G domain. Residues 17 to 24 (AHIDAGKT), 85 to 89 (DTPGH), and 139 to 142 (NKMD) each bind GTP. The interval 288 to 308 (ADTPTVEGTDPSDPNKVIERK) is disordered.

Belongs to the TRAFAC class translation factor GTPase superfamily. Classic translation factor GTPase family. EF-G/EF-2 subfamily.

The protein localises to the cytoplasm. Its function is as follows. Catalyzes the GTP-dependent ribosomal translocation step during translation elongation. During this step, the ribosome changes from the pre-translocational (PRE) to the post-translocational (POST) state as the newly formed A-site-bound peptidyl-tRNA and P-site-bound deacylated tRNA move to the P and E sites, respectively. Catalyzes the coordinated movement of the two tRNA molecules, the mRNA and conformational changes in the ribosome. The polypeptide is Elongation factor G (Porphyromonas gingivalis (strain ATCC 33277 / DSM 20709 / CIP 103683 / JCM 12257 / NCTC 11834 / 2561)).